The sequence spans 793 residues: Putative glutamate--cysteine ligase 2-3 (793 aa).

The carboxylate-amine ligase stretch occupies residues 1–407 (MLASDPRKVG…RFWDRGDTAD (407 aa)). A disordered region spans residues 367-390 (TEHLPDVEVPPPREPGPKSTGAGR). The peptidase M20 stretch occupies residues 408-793 (MTWTESTELD…ALTRLEDQSG (386 aa)).

In the C-terminal section; belongs to the glutamate--cysteine ligase type 2 family. YbdK subfamily.

It catalyses the reaction L-cysteine + L-glutamate + ATP = gamma-L-glutamyl-L-cysteine + ADP + phosphate + H(+). Its function is as follows. ATP-dependent carboxylate-amine ligase which exhibits weak glutamate--cysteine ligase activity. This Rhodococcus jostii (strain RHA1) protein is Putative glutamate--cysteine ligase 2-3.